The following is a 383-amino-acid chain: MKPQFRNTVERMYRDTFFYNFNNRPILSRRNTVWLCYEVKTRGPSMPTWDAKIFRGQVYSKAKYHPEMRFLHWFRKWRQLHRDQEYEVTWYVSWSPCTGCANSVATFLAEDPKVTLTIFVARLYYFWKPDYQEALRVLCQKRGSPHATMKIMNYNEFQHCWNKFVRGRREPFEPWENLPKHYTLLHATLGELLRHLMDPGTFTSNFYNKPWVSGQHETYLCYKVERLHNGTWVPLNQHRGFLRNQAPDIHGFPKGRHAELCFLDLIPFWKLDGQQYRVTCFTSWSPCFSCAQEMAKFISNNEHVSLCIFAARIYDDQGRCQEGLRTLHRDGAKIAMMNYSEFEYCWDTFVDRQGRPFQPWDGLDEHSQDLSGRLRAILQNQGN.

Residues 1–60 (MKPQFRNTVERMYRDTFFYNFNNRPILSRRNTVWLCYEVKTRGPSMPTWDAKIFRGQVYS) are essential for cytoplasmic localization. CMP/dCMP-type deaminase domains follow at residues 29–138 (RRNT…LRVL) and 214–327 (GQHE…LRTL). The residue at position 32 (T32) is a Phosphothreonine; by PKA. Residues H65, C97, and C100 each coordinate Zn(2+). The tract at residues 209–335 (KPWVSGQHET…TLHRDGAKIA (127 aa)) is necessary for homooligomerization. The tract at residues 213 to 215 (SGQ) is interaction with DNA. At T218 the chain carries Phosphothreonine; by PKA and CAMK2. A Zn(2+)-binding site is contributed by H257. E259 serves as the catalytic Proton donor. Positions 287 and 290 each coordinate Zn(2+). The interval 312–319 (RIYDDQGR) is interaction with DNA.

It belongs to the cytidine and deoxycytidylate deaminase family. As to quaternary structure, homodimer. It depends on Zn(2+) as a cofactor.

It is found in the cytoplasm. It localises to the nucleus. The protein resides in the P-body. The catalysed reaction is a 2'-deoxycytidine in single-stranded DNA + H2O + H(+) = a 2'-deoxyuridine in single-stranded DNA + NH4(+). DNA deaminase (cytidine deaminase) which acts as an inhibitor of retrovirus replication and retrotransposon mobility. After the penetration of retroviral nucleocapsids into target cells of infection and the initiation of reverse transcription, it can induce the conversion of cytosine to uracil in the minus-sense single-strand viral DNA, leading to G-to-A hypermutations in the subsequent plus-strand viral DNA. The resultant detrimental levels of mutations in the proviral genome, along with a deamination-independent mechanism that works prior to the proviral integration, together exert efficient antiretroviral effects in infected target cells. Selectively targets single-stranded DNA and does not deaminate double-stranded DNA or single- or double-stranded RNA. The chain is DNA dC-&gt;dU-editing enzyme APOBEC-3G (APOBEC3G) from Papio anubis (Olive baboon).